The following is a 385-amino-acid chain: Bifunctional chorismate mutase/prephenate dehydratase (385 aa).

Residues 1–92 (MPSKNDLLSF…ESVLTQKKLL (92 aa)) form the Chorismate mutase domain. Substrate is bound by residues arginine 11, arginine 28, lysine 39, aspartate 48, glutamate 52, serine 84, and glutamine 88. A Prephenate dehydratase domain is found at 105–285 (SFSFLGPKGS…NITRFILLSR (181 aa)). The regulatory stretch occupies residues 286–385 (KPVSISSKIP…PSENITPIIP (100 aa)). The ACT domain occupies 299–376 (TLIFNTGQES…KFIKILGCYP (78 aa)).

It localises to the cytoplasm. It carries out the reaction chorismate = prephenate. It catalyses the reaction prephenate + H(+) = 3-phenylpyruvate + CO2 + H2O. It functions in the pathway amino-acid biosynthesis; L-phenylalanine biosynthesis; phenylpyruvate from prephenate: step 1/1. It participates in metabolic intermediate biosynthesis; prephenate biosynthesis; prephenate from chorismate: step 1/1. Functionally, catalyzes the Claisen rearrangement of chorismate to prephenate and the decarboxylation/dehydration of prephenate to phenylpyruvate. This Buchnera aphidicola subsp. Schizaphis graminum (strain Sg) protein is Bifunctional chorismate mutase/prephenate dehydratase (pheA).